Reading from the N-terminus, the 345-residue chain is Fibronectin type 3 and ankyrin repeat domains protein 1 (345 aa).

Residues 8–108 (PPSKPHPPVV…LVSVSTTREP (101 aa)) enclose the Fibronectin type-III domain. 6 ANK repeats span residues 109–139 (ISSEHLHRAVSVNDEDLLVRILQGGRVKVDV), 143–172 (FGFTALMVAAQKGYTRLVKILVSNGTDVNL), 176–205 (SGKDSLMLACYAGHLDVVKYLRRHGASWQA), 209–238 (GGCTALHWAADGGHCSVIEWMIKDGCEVDV), 243–273 (SGWTPLMRVSAVSGNQRVASLLIDAGANVNV), and 277–306 (NGKTPLMVAVLNNHEELVQLLLDKGADASV).

As to quaternary structure, interacts with COPS5; regulates the phosphorylation of JUN and the transcriptional activity of AP-1. Interacts with RYBP; may prevent the ubiquitin-mediated proteasomal degradation of FANK1. In terms of processing, polyubiquitinated. Polyubiquitination leads to proteasomal degradation. As to expression, mostly restricted to testis.

Its subcellular location is the nucleus. The protein localises to the cytoplasm. It localises to the cytosol. It is found in the cytoskeleton. The protein resides in the cilium basal body. Its subcellular location is the cell projection. The protein localises to the cilium. Functionally, through the activation of JUN and AP-1-mediated transcription, may regulate apoptosis. This Homo sapiens (Human) protein is Fibronectin type 3 and ankyrin repeat domains protein 1.